The following is a 314-amino-acid chain: Taste receptor type 2 member 42 (314 aa).

At 1–7 (MATEMDK) the chain is on the extracellular side. The chain crosses the membrane as a helical span at residues 8-28 (IFLTLATVEFIIGMLGNVFIG). Topologically, residues 29 to 50 (LVNCSEGIKNQKVFSVDFILTC) are cytoplasmic. Residues 51–71 (LAISTIGHLLVILFDSCVVGL) form a helical membrane-spanning segment. Residues 72–101 (APHLYATDRVRRPVTMLWHMXNHLTTWLAT) are Extracellular-facing. Residues 102-122 (CLSIFYFFKIAHFPHSLFLWL) form a helical membrane-spanning segment. The Cytoplasmic portion of the chain corresponds to 123–127 (RWRMN). A helical membrane pass occupies residues 128 to 148 (RVIAILLTLSLFLLIFDCLVL). The Extracellular segment spans residues 149–187 (EMFIDXSLNIIDKSNLTLYLDESKTPYDKLSLLKILLSL). N-linked (GlcNAc...) asparagine glycosylation occurs at Asn163. A helical transmembrane segment spans residues 188 to 208 (NSFIPFSLCLTSLLFLFLSLV). Residues 209–238 (RHTRNLKLSSLGSRDSSTEAHRRAMKMVMS) lie on the Cytoplasmic side of the membrane. A helical membrane pass occupies residues 239-259 (LLFLFIVHFFSLQVANWTFCI). Residues 260–265 (LGNNKY) are Extracellular-facing. A helical transmembrane segment spans residues 266–286 (TQFVTLALHAFPSCHSFILIL). At 287–314 (GNSKLRQTAVRLLWHLRNYTKRPNPLPL) the chain is on the cytoplasmic side.

This sequence belongs to the G-protein coupled receptor T2R family.

The protein localises to the membrane. Its function is as follows. Receptor that may play a role in the perception of bitterness and is gustducin-linked. May play a role in sensing the chemical composition of the gastrointestinal content. The activity of this receptor may stimulate alpha gustducin, mediate PLC-beta-2 activation and lead to the gating of TRPM5. The chain is Taste receptor type 2 member 42 (TAS2R42) from Macaca mulatta (Rhesus macaque).